Reading from the N-terminus, the 481-residue chain is Lincomycin resistance protein (481 aa).

Transmembrane regions (helical) follow at residues 30–50 (WVTL…VTVV), 67–87 (QLTW…MVGG), 99–119 (LLFG…APNL), 127–147 (FGQG…IACS), 162–182 (VASV…QLFS), 185–205 (WIFL…LLLV), 215–235 (PVDL…IFGV), 245–265 (LPLA…FVAV), 285–305 (LVAN…FFLL), 318–338 (IEAG…CVLV), 340–360 (GLIE…LAGP), 374–394 (LLTS…GLVA), 421–441 (LGGA…HLGG), and 446–466 (FTVA…AVLA).

The protein belongs to the major facilitator superfamily. TCR/Tet family.

It is found in the cell membrane. In terms of biological role, proton-dependent transporter. May mediate the efflux of lincomycin. This chain is Lincomycin resistance protein (lmrA), found in Streptomyces lincolnensis.